Consider the following 722-residue polypeptide: Polyribonucleotide nucleotidyltransferase (722 aa).

Residues Asp498 and Asp504 each contribute to the Mg(2+) site. The region spanning 565-624 is the KH domain; the sequence is PQFHTMKIDPDKIRDIIGKGGATIRSITEETGASIDIDDNGTIKIYADDGDGMQAAIARI. The region spanning 634–702 is the S1 motif domain; it reads GAVYQGKVVR…QRGRIKLSIK (69 aa).

It belongs to the polyribonucleotide nucleotidyltransferase family. Component of the RNA degradosome, which is a multiprotein complex involved in RNA processing and mRNA degradation. The cofactor is Mg(2+).

Its subcellular location is the cytoplasm. It carries out the reaction RNA(n+1) + phosphate = RNA(n) + a ribonucleoside 5'-diphosphate. Its function is as follows. Involved in mRNA degradation. Catalyzes the phosphorolysis of single-stranded polyribonucleotides processively in the 3'- to 5'-direction. The polypeptide is Polyribonucleotide nucleotidyltransferase (Saccharophagus degradans (strain 2-40 / ATCC 43961 / DSM 17024)).